The sequence spans 348 residues: Protein RecA (348 aa).

67–74 is a binding site for ATP; sequence GPESSGKT.

Belongs to the RecA family.

The protein localises to the cytoplasm. Can catalyze the hydrolysis of ATP in the presence of single-stranded DNA, the ATP-dependent uptake of single-stranded DNA by duplex DNA, and the ATP-dependent hybridization of homologous single-stranded DNAs. It interacts with LexA causing its activation and leading to its autocatalytic cleavage. This chain is Protein RecA, found in Amycolatopsis mediterranei (strain U-32).